A 247-amino-acid polypeptide reads, in one-letter code: MMSNENFDNDYNLPPPNDSAEDLKIFIKRYERSVDSTLLEIDENKREALEKYIEERDRKMKYEIECNERLQGWKKLAIEREISEEQSGEVQFPRWIDEWANTKLGGIFERIFSKMDSMQNDMNSRFDAMQNEMNSRFDTVQNEMTSMKGEMAEMKVEMVEMKRETIRLNTRIDLLEQKTEARFQSIEQRFNSIDQRFNSIDRRFDSMEQRLDSMDQKMETIDARSCRSIMLTRKLENTTRSDQGYLA.

Coiled coils occupy residues 27–63 (IKRYERSVDSTLLEIDENKREALEKYIEERDRKMKYE) and 138–225 (DTVQ…DARS).

It belongs to the UPF0612 family.

It is found in the cytoplasm. In Schizosaccharomyces pombe (strain 972 / ATCC 24843) (Fission yeast), this protein is UPF0612 protein P20C8.01c.